Consider the following 225-residue polypeptide: Phosphoglycolate phosphatase (225 aa).

The active-site Nucleophile is Asp-11. Asp-11, Asp-13, and Asp-174 together coordinate Mg(2+).

It belongs to the HAD-like hydrolase superfamily. CbbY/CbbZ/Gph/YieH family. Mg(2+) serves as cofactor.

It carries out the reaction 2-phosphoglycolate + H2O = glycolate + phosphate. It functions in the pathway organic acid metabolism; glycolate biosynthesis; glycolate from 2-phosphoglycolate: step 1/1. Its function is as follows. Specifically catalyzes the dephosphorylation of 2-phosphoglycolate. Is involved in the dissimilation of the intracellular 2-phosphoglycolate formed during the DNA repair of 3'-phosphoglycolate ends, a major class of DNA lesions induced by oxidative stress. This is Phosphoglycolate phosphatase from Nitrosococcus oceani (strain ATCC 19707 / BCRC 17464 / JCM 30415 / NCIMB 11848 / C-107).